The sequence spans 376 residues: 1-acyl-sn-glycerol-3-phosphate acyltransferase gamma (376 aa).

At 1 to 124 the chain is on the cytoplasmic side; that stretch reads MGLLAYLKTQ…LGSSKVLAKR (124 aa). The short motif at 96-101 is the HXXXXD motif element; the sequence is HNFEID. Residues 125 to 145 form a helical membrane-spanning segment; that stretch reads ELLCVPLIGWTWYFLEIVFCK. The Lumenal portion of the chain corresponds to 146–316; the sequence is RKWEEDRDTV…TLLNFLCWAT (171 aa). A helical membrane pass occupies residues 317 to 339; that stretch reads ILLSPLFSFVLGVFASGSPLLIL. The Cytoplasmic segment spans residues 340 to 376; the sequence is TFLGFVGAASFGVRRLIGVTEIEKGSSYGNQELKKKE.

The protein belongs to the 1-acyl-sn-glycerol-3-phosphate acyltransferase family. Widely expressed. Mainly expressed in testis, kidney and liver (at protein level).

It is found in the endoplasmic reticulum membrane. Its subcellular location is the nucleus envelope. The enzyme catalyses a 1-acyl-sn-glycero-3-phosphate + an acyl-CoA = a 1,2-diacyl-sn-glycero-3-phosphate + CoA. It catalyses the reaction pentadecanoyl-CoA + 1-(9Z-octadecenoyl)-sn-glycero-3-phosphate = 1-(9Z)-octadecenoyl-2-pentadecanoyl-sn-glycero-3-phosphate + CoA. The catalysed reaction is heptadecanoyl-CoA + 1-(9Z-octadecenoyl)-sn-glycero-3-phosphate = 1-(9Z)-octadecenoyl-2-heptadecanoyl-sn-glycero-3-phosphate + CoA. It carries out the reaction 1-(9Z-octadecenoyl)-sn-glycero-3-phosphate + octadecanoyl-CoA = 1-(9Z-octadecenoyl)-2-octadecanoyl-sn-glycero-3-phosphate + CoA. The enzyme catalyses nonadecanoyl-CoA + 1-(9Z-octadecenoyl)-sn-glycero-3-phosphate = 1-(9Z)-octadecenoyl-2-nonadecanoyl-sn-glycero-3-phosphate + CoA. It catalyses the reaction 1-(9Z-octadecenoyl)-sn-glycero-3-phosphate + (5Z,8Z,11Z,14Z)-eicosatetraenoyl-CoA = 1-(9Z)-octadecenoyl-2-(5Z,8Z,11Z,14Z)-eicosatetraenoyl-sn-glycero-3-phosphate + CoA. The catalysed reaction is 1-(9Z-octadecenoyl)-sn-glycero-3-phosphate + (9Z)-octadecenoyl-CoA = 1,2-di-(9Z-octadecenoyl)-sn-glycero-3-phosphate + CoA. It carries out the reaction 1-(9Z-octadecenoyl)-sn-glycero-3-phosphate + (9Z,12Z)-octadecadienoyl-CoA = 1-(9Z)-octadecenoyl-2-(9Z,12Z)-octadecadienoyl-sn-glycero-3-phosphate + CoA. The enzyme catalyses 1-(9Z-octadecenoyl)-sn-glycero-3-phosphocholine + (5Z,8Z,11Z,14Z)-eicosatetraenoyl-CoA = 1-(9Z)-octadecenoyl-2-(5Z,8Z,11Z,14Z)-icosatetraenoyl-sn-glycero-3-phosphocholine + CoA. It catalyses the reaction 1-(9Z-octadecenoyl)-sn-glycero-3-phospho-(1D-myo-inositol) + (5Z,8Z,11Z,14Z)-eicosatetraenoyl-CoA = 1-(9Z-octadecenoyl)-2-(5Z,8Z,11Z,14Z-eicosatetraenoyl)-sn-glycero-3-phospho-1D-myo-inositol + CoA. The catalysed reaction is 1-(9Z-octadecenoyl)-sn-glycero-3-phospho-L-serine + (5Z,8Z,11Z,14Z)-eicosatetraenoyl-CoA = 1-(9Z-octadecenoyl)-2-(5Z,8Z,11Z,14Z-eicosatetraenoyl)-sn-glycero-3-phospho-L-serine + CoA. It carries out the reaction 1-hexadecanoyl-sn-glycero-3-phosphate + (9Z)-octadecenoyl-CoA = 1-hexadecanoyl-2-(9Z-octadecenoyl)-sn-glycero-3-phosphate + CoA. The enzyme catalyses 1-hexadecanoyl-sn-glycero-3-phosphate + (5Z,8Z,11Z,14Z)-eicosatetraenoyl-CoA = 1-hexadecanoyl-2-(5Z,8Z,11Z,14Z-eicosatetraenoyl)-sn-glycero-3-phosphate + CoA. It catalyses the reaction 1-heptadecanoyl-sn-glycero-3-phosphate + (5Z,8Z,11Z,14Z)-eicosatetraenoyl-CoA = 1-heptadecanoyl-2-(5Z,8Z,11Z,14Z)-eicosatetraenoyl-sn-glycero-3-phosphate + CoA. The catalysed reaction is 1-octadecanoyl-sn-glycero-3-phosphate + (9Z)-octadecenoyl-CoA = 1-octadecanoyl-2-(9Z-octadecenoyl)-sn-glycero-3-phosphate + CoA. It carries out the reaction 1-octadecanoyl-sn-glycero-3-phosphate + (5Z,8Z,11Z,14Z)-eicosatetraenoyl-CoA = 1-octadecanoyl-2-(5Z,8Z,11Z,14Z-eicosatetraenoyl)-sn-glycero-3-phosphate + CoA. The enzyme catalyses 1-(9Z-octadecenoyl)-sn-glycero-3-phosphate + hexadecanoyl-CoA = 1-hexadecanoyl-2-(9Z-octadecenoyl)-sn-glycero-3-phosphate + CoA. It catalyses the reaction 1-O-(9Z-octadecenyl)-sn-glycero-3-phosphate + (5Z,8Z,11Z,14Z)-eicosatetraenoyl-CoA = 1-O-(9Z-octadecenyl)-2-(5Z,8Z,11Z,14Z-eicosatetraenoyl)-sn-glycero-3-phosphate + CoA. The catalysed reaction is a 1-acyl-sn-glycero-3-phospho-(1D-myo-inositol) + (5Z,8Z,11Z,14Z)-eicosatetraenoyl-CoA = a 1-acyl-2-(5Z,8Z,11Z,14Z-eicosatetraenoyl)-sn-glycero-3-phospho-(1D-myo-inositol) + CoA. The protein operates within phospholipid metabolism; CDP-diacylglycerol biosynthesis; CDP-diacylglycerol from sn-glycerol 3-phosphate: step 2/3. Its activity is regulated as follows. In males, activity increases in an age-dependent fashion, maybe derived from the induction by sex-hormones. Functionally, converts 1-acyl-sn-glycerol-3-phosphate (lysophosphatidic acid or LPA) into 1,2-diacyl-sn-glycerol-3-phosphate (phosphatidic acid or PA) by incorporating an acyl moiety at the sn-2 position of the glycerol backbone. Acts on LPA containing saturated or unsaturated fatty acids C16:0-C20:4 at the sn-1 position using C18:1, C20:4 or C18:2-CoA as the acyl donor. Also acts on lysophosphatidylcholine, lysophosphatidylinositol and lysophosphatidylserine using C18:1 or C20:4-CoA. Has a preference for arachidonoyl-CoA as a donor. Also has a modest lysophosphatidylinositol acyltransferase (LPIAT) activity, converts lysophosphatidylinositol (LPI) into phosphatidylinositol. The chain is 1-acyl-sn-glycerol-3-phosphate acyltransferase gamma from Mus musculus (Mouse).